The chain runs to 418 residues: L-glutamine:2-deoxy-scyllo-inosose aminotransferase (418 aa).

At K192 the chain carries N6-(pyridoxal phosphate)lysine.

The protein belongs to the DegT/DnrJ/EryC1 family. L-glutamine:2-deoxy-scyllo-inosose/scyllo-inosose aminotransferase subfamily. Requires pyridoxal 5'-phosphate as cofactor.

It carries out the reaction 2-deoxy-L-scyllo-inosose + L-glutamine = 2-deoxy-scyllo-inosamine + 2-oxoglutaramate. The catalysed reaction is 3-amino-2,3-dideoxy-scyllo-inosose + L-glutamine = 2-deoxystreptamine + 2-oxoglutaramate. It functions in the pathway metabolic intermediate biosynthesis; 2-deoxystreptamine biosynthesis; 2-deoxystreptamine from D-glucose 6-phosphate: step 2/4. Its pathway is metabolic intermediate biosynthesis; 2-deoxystreptamine biosynthesis; 2-deoxystreptamine from D-glucose 6-phosphate: step 4/4. It participates in antibiotic biosynthesis; butirosin biosynthesis. Its function is as follows. Catalyzes the PLP-dependent transamination of 2-deoxy-scyllo-inosose (2-DOI) to form 2-deoxy-scyllo-inosamine (2-DOIA) using L-glutamine as the amino donor. Also catalyzes the transamination of 3-amino-2,3-dideoxy-scyllo-inosose (keto-2-DOIA) into 2-deoxystreptamine (2-DOS). The polypeptide is L-glutamine:2-deoxy-scyllo-inosose aminotransferase (btrR) (Niallia circulans (Bacillus circulans)).